The primary structure comprises 227 residues: DNA repair protein RecO (227 aa).

This sequence belongs to the RecO family.

Involved in DNA repair and RecF pathway recombination. This Pseudomonas putida (strain ATCC 47054 / DSM 6125 / CFBP 8728 / NCIMB 11950 / KT2440) protein is DNA repair protein RecO.